A 334-amino-acid chain; its full sequence is Ornithine carbamoyltransferase (334 aa).

Carbamoyl phosphate-binding positions include Ser57 to Thr60, Gln84, Arg108, and His135 to Gln138. L-ornithine-binding positions include Asn169, Asp233, and Ser237–Met238. Residues Cys275–Leu276 and Arg320 each bind carbamoyl phosphate.

This sequence belongs to the aspartate/ornithine carbamoyltransferase superfamily. OTCase family.

Its subcellular location is the cytoplasm. The catalysed reaction is carbamoyl phosphate + L-ornithine = L-citrulline + phosphate + H(+). It participates in amino-acid biosynthesis; L-arginine biosynthesis; L-arginine from L-ornithine and carbamoyl phosphate: step 1/3. In terms of biological role, reversibly catalyzes the transfer of the carbamoyl group from carbamoyl phosphate (CP) to the N(epsilon) atom of ornithine (ORN) to produce L-citrulline. This chain is Ornithine carbamoyltransferase, found in Vibrio vulnificus (strain YJ016).